A 483-amino-acid polypeptide reads, in one-letter code: Probable 4-aminobutyrate aminotransferase, mitochondrial (483 aa).

Residue glycine 148 to threonine 149 participates in pyridoxal 5'-phosphate binding. Substrate is bound at residue arginine 204. Lysine 341 is subject to N6-(pyridoxal phosphate)lysine. Threonine 365 contributes to the pyridoxal 5'-phosphate binding site.

Belongs to the class-III pyridoxal-phosphate-dependent aminotransferase family. Homodimer. The cofactor is pyridoxal 5'-phosphate.

It is found in the mitochondrion matrix. The enzyme catalyses 4-aminobutanoate + 2-oxoglutarate = succinate semialdehyde + L-glutamate. It carries out the reaction (S)-3-amino-2-methylpropanoate + 2-oxoglutarate = 2-methyl-3-oxopropanoate + L-glutamate. This is Probable 4-aminobutyrate aminotransferase, mitochondrial (gta-1) from Caenorhabditis elegans.